A 257-amino-acid polypeptide reads, in one-letter code: 3-methyl-2-oxobutanoate hydroxymethyltransferase (257 aa).

Aspartate 42 and aspartate 86 together coordinate Mg(2+). 3-methyl-2-oxobutanoate contacts are provided by residues 42 to 43, aspartate 86, and lysine 116; that span reads DS. Position 118 (glutamate 118) interacts with Mg(2+). Glutamate 185 functions as the Proton acceptor in the catalytic mechanism.

Belongs to the PanB family. In terms of assembly, homodecamer; pentamer of dimers. The cofactor is Mg(2+).

It is found in the cytoplasm. The catalysed reaction is 3-methyl-2-oxobutanoate + (6R)-5,10-methylene-5,6,7,8-tetrahydrofolate + H2O = 2-dehydropantoate + (6S)-5,6,7,8-tetrahydrofolate. It functions in the pathway cofactor biosynthesis; (R)-pantothenate biosynthesis; (R)-pantoate from 3-methyl-2-oxobutanoate: step 1/2. In terms of biological role, catalyzes the reversible reaction in which hydroxymethyl group from 5,10-methylenetetrahydrofolate is transferred onto alpha-ketoisovalerate to form ketopantoate. The chain is 3-methyl-2-oxobutanoate hydroxymethyltransferase from Prochlorococcus marinus (strain MIT 9515).